Here is a 194-residue protein sequence, read N- to C-terminus: Small ribosomal subunit protein uS4c (194 aa).

Residues 82–143 form the S4 RNA-binding domain; that stretch reads MRLDNILFRL…KERSKVLIQN (62 aa).

This sequence belongs to the universal ribosomal protein uS4 family. In terms of assembly, part of the 30S ribosomal subunit. Contacts protein S5. The interaction surface between S4 and S5 is involved in control of translational fidelity.

Its subcellular location is the plastid. The protein resides in the chloroplast. Functionally, one of the primary rRNA binding proteins, it binds directly to 16S rRNA where it nucleates assembly of the body of the 30S subunit. With S5 and S12 plays an important role in translational accuracy. The polypeptide is Small ribosomal subunit protein uS4c (rps4) (Cypella sp. (strain Porto Alegre 027)).